The following is a 680-amino-acid chain: Lipase 1 (680 aa).

The N-terminal stretch at 1–34 (MKSQNKYSIRKFSVGASSILIATLLFLSGGQAQA) is a signal peptide. Residues 35 to 290 (AEKQVNMGNS…AKAKDDQTNK (256 aa)) constitute a propeptide that is removed on maturation. The disordered stretch occupies residues 82–259 (KNLHNDKTIS…PTKDNDKKNG (178 aa)). Residues 84–112 (LHNDKTISEENHRKTDDLNKDQLKDDKKS) are compositionally biased toward basic and acidic residues. Polar residues predominate over residues 125–138 (KNNNANPSDVNQGL). Low complexity predominate over residues 148–170 (SKVASQQQSKEADNSQDSNANNN). The span at 204–223 (QPQQNNQANDKITNYNFNNE) shows a compositional bias: polar residues. Residues 224 to 234 (QEVKPQKDEKT) are compositionally biased toward basic and acidic residues. The segment covering 235 to 246 (LSVSDLKNNQKS) has biased composition (polar residues). The Nucleophile role is filled by Ser-408. Asp-600 acts as the Charge relay system in catalysis. Residue Asp-638 coordinates Ca(2+). His-639 functions as the Charge relay system in the catalytic mechanism. Ca(2+) contacts are provided by Asp-641, Asp-646, and Asp-649.

This sequence belongs to the AB hydrolase superfamily. Lipase family.

It is found in the secreted. It catalyses the reaction a triacylglycerol + H2O = a diacylglycerol + a fatty acid + H(+). This Staphylococcus aureus (strain MSSA476) protein is Lipase 1 (lip1).